Here is a 149-residue protein sequence, read N- to C-terminus: F420H(2)-dependent quinone reductase MT1299 (149 aa).

Residues 48–50, 54–59, 70–73, 81–85, and Tyr130 contribute to the coenzyme F420-(gamma-Glu)n site; these read AKT, RTTSLT, VASK, and GWYHN.

The protein belongs to the F420H(2)-dependent quinone reductase family.

The protein localises to the cell membrane. It catalyses the reaction oxidized coenzyme F420-(gamma-L-Glu)(n) + a quinol + H(+) = reduced coenzyme F420-(gamma-L-Glu)(n) + a quinone. Its function is as follows. Involved in a F420-dependent anti-oxidant mechanism that protects M.tuberculosis against oxidative stress and bactericidal agents. Catalyzes the F420H(2)-dependent two-electron reduction of quinones to dihydroquinones, thereby preventing the formation of cytotoxic semiquinones obtained by the one-electron reduction pathway. In vitro, catalyzes the reduction of menadione to menadiol; since menaquinone is the sole quinone electron carrier in the respiratory chain in M.tuberculosis, the physiological electron acceptor for Fqr-mediated F420H(2) oxidation is therefore likely to be the endogenous menaquinone found in the membrane fraction of M.tuberculosis. This Mycobacterium tuberculosis (strain CDC 1551 / Oshkosh) protein is F420H(2)-dependent quinone reductase MT1299.